The sequence spans 269 residues: MRKALKDSKRIVVKVGTSTLTYENGSVNLMRIEKLSRVISDICNMGKEVVLVSSGAIGVGVGKLRLEKKPETIREKQAVAAVGQCALMHIYNKFFGEYSHVVAQVLLTRDVLENERMKNNVCNTFDTLLEKGIIPIVNENDAISIDEIQNILNFGDNDNLSAIVSTLVNADTLIILSDIDGFYDSDPRTNEDSKMLKEVYEITPEIEECAGGAGSNRGTGGMVTKLSAAKVATSNGIDMILANGENPEILIDILNGEDIGTMFVAKKGE.

K14 is an ATP binding site. S54, D141, and N157 together coordinate substrate. ATP contacts are provided by residues 177–178 and 219–225; these read SD and TGGMVTK.

Belongs to the glutamate 5-kinase family.

The protein localises to the cytoplasm. It catalyses the reaction L-glutamate + ATP = L-glutamyl 5-phosphate + ADP. It functions in the pathway amino-acid biosynthesis; L-proline biosynthesis; L-glutamate 5-semialdehyde from L-glutamate: step 1/2. In terms of biological role, catalyzes the transfer of a phosphate group to glutamate to form L-glutamate 5-phosphate. The polypeptide is Glutamate 5-kinase (Clostridium perfringens (strain 13 / Type A)).